Here is a 1962-residue protein sequence, read N- to C-terminus: Sodium channel protein type 10 subunit alpha (1962 aa).

The Cytoplasmic portion of the chain corresponds to 1-125 (MEFPFGSLET…FNLIRRTAIK (125 aa)). Positions 32 to 56 (QAAKKAKGKHREQKDQEEKPRPQLD) are disordered. Over residues 33–42 (AAKKAKGKHR) the composition is skewed to basic residues. A compositionally biased stretch (basic and acidic residues) spans 43–55 (EQKDQEEKPRPQL). The stretch at 116–414 (FNLIRRTAIK…VTMAYEEQNQ (299 aa)) is one I repeat. A helical transmembrane segment spans residues 126-149 (VSVHSWFSLFITVTILVNCVGMTQ). The Extracellular segment spans residues 150–154 (TELPD). The helical transmembrane segment at 155–174 (RIEYVFTVIYTFEALIKILA) threads the bilayer. Residues 175–187 (RGFCLNEFAYLRD) are Cytoplasmic-facing. The helical transmembrane segment at 188–206 (PWDWLDFSVITLAYIGEAT) threads the bilayer. Over 207–212 (ALRGIS) the chain is Extracellular. The chain crosses the membrane as a helical; Voltage-sensor span at residues 213-232 (GLRTFRVLRALKTVSVIPGL). Residues 233–248 (KVIVGALIHSVRKLAD) lie on the Cytoplasmic side of the membrane. The helical transmembrane segment at 249 to 272 (VTILTVFCLSVFALVGLQLFKGNL) threads the bilayer. Residues 273-350 (KNKCVKNCAA…PDFNYTSFDS (78 aa)) are Extracellular-facing. Cys276 and Cys328 are joined by a disulfide. Residues Asn284, Asn288, Asn321, and Asn344 are each glycosylated (N-linked (GlcNAc...) asparagine). An intramembrane region (pore-forming) is located at residues 351 to 375 (FAWAFLSLFRLMTQDSWERLYQQTL). Residues 376-382 (RASGKMY) are Extracellular-facing. The helical transmembrane segment at 383–408 (MVFFVLVIFLGSFYLVNLILAVVTMA) threads the bilayer. At 409–668 (YEEQNQATID…TWVKLKTVLF (260 aa)) the chain is on the cytoplasmic side. Residues Ser450, Ser453, Ser476, and Ser488 each carry the phosphoserine modification. Positions 452–463 (HSCNGSPLPSKN) are enriched in polar residues. Disordered regions lie at residues 452–493 (HSCN…PYNQ) and 521–586 (LDTS…TGEL). Residues Ser621 and Ser624 each carry the phosphoserine modification. One copy of the II repeat lies at 656-920 (CCPTWVKLKT…DEDGEVNNLQ (265 aa)). The chain crosses the membrane as a helical span at residues 669 to 693 (GIVTDPFAELTTTLCIVVNTVFMAM). Residues 694–704 (EHHGMSSAFEA) are Extracellular-facing. A helical membrane pass occupies residues 705-728 (MLQIGNIVFTVFFTAEMVFKIIAF). The Cytoplasmic portion of the chain corresponds to 729-736 (DPYYYFQK). The helical transmembrane segment at 737–756 (RWNIFDCIIVTVSLIELGAA) threads the bilayer. At 757-762 (RKGSLS) the chain is on the extracellular side. The helical; Voltage-sensor transmembrane segment at 763-782 (VLRTFRLLRVFKLAKSWPTL) threads the bilayer. Residues 783–798 (NTLIKIIGNSVGALGN) are Cytoplasmic-facing. Residues 799 to 819 (LTIILAIIVFVFALVGKQLLG) form a helical membrane-spanning segment. The Extracellular segment spans residues 820–843 (ENYRDNRRNISAPNEEWPRWHMHD). The N-linked (GlcNAc...) asparagine glycan is linked to Asn828. Positions 844–864 (FFHSFLIVFRILCGEWIENMW) form an intramembrane region, pore-forming. Topologically, residues 865–873 (ACMEVGQKS) are extracellular. Cys866 and Cys875 form a disulfide bridge. Residues 874-899 (ICLILFLTVMVLGNLVVLNLFTALLL) form a helical membrane-spanning segment. At 900–1154 (NSFSADNLAT…GWQVRKTCYR (255 aa)) the chain is on the cytoplasmic side. Positions 1015 to 1026 (LDDLEEDGEEDS) are enriched in acidic residues. The disordered stretch occupies residues 1015 to 1035 (LDDLEEDGEEDSQSSQQEVIL). The stretch at 1147 to 1456 (QVRKTCYRIV…KKYYNAMKKL (310 aa)) is one III repeat. The chain crosses the membrane as a helical span at residues 1155–1178 (IVEHSWFESFIIFMILLSSGSLAF). Topologically, residues 1179–1191 (EDYHLDQKPTVKA) are extracellular. The helical transmembrane segment at 1192 to 1217 (LLEYTDRMFTFIFVLEMLLKWVAYGF) threads the bilayer. At 1218-1223 (KKYFTN) the chain is on the cytoplasmic side. The helical transmembrane segment at 1224-1245 (AWCWLDFLIVNISLISLIAKIL) threads the bilayer. Over 1246 to 1249 (QYSD) the chain is Extracellular. A helical; Voltage-sensor membrane pass occupies residues 1250-1271 (VASIKALRTLRALRPLRALSRF). The Cytoplasmic portion of the chain corresponds to 1272 to 1290 (EGMRVVVDALVGAIPSIMN). Residues 1291 to 1318 (VLLVCLIFWLIFSTMGVNFFAGKFGRCI) form a helical membrane-spanning segment. N-linked (GlcNAc...) asparagine glycosylation is found at Asn1319, Asn1335, and Asn1343. Over 1319-1360 (NKTNEYFSLVPLSIVNNISDCKYQNHTGSFFWVNVKVNFDNV) the chain is Extracellular. Positions 1361–1382 (AMGYLALLQVATFKGWMDIMYA) form an intramembrane region, pore-forming. Residues 1383–1398 (AVDARDVNLQPKWEDN) lie on the Extracellular side of the membrane. The chain crosses the membrane as a helical span at residues 1399 to 1425 (VYMYLYFVIFIIFGGFFTLNLFVGVII). Over 1426–1478 (DNFNQQKKKLGGQDIFMTEEQKKYYNAMKKLGSKKPQKPIPRPLNKYQGFVFD) the chain is Cytoplasmic. Ser1458 is subject to Phosphoserine; by PKC. One copy of the IV repeat lies at 1465-1764 (IPRPLNKYQG…WEKFDPEATQ (300 aa)). A helical membrane pass occupies residues 1479 to 1502 (IVTKQAFDIVIMVLICLNMITMMV). Residues 1503–1513 (ETDEQSAEKTK) are Extracellular-facing. A helical membrane pass occupies residues 1514 to 1537 (ILNKINQFFVAVFTGECVMKMFAL). Residues 1538–1543 (RHYYFT) are Cytoplasmic-facing. The chain crosses the membrane as a helical span at residues 1544-1567 (NGWNVFDFIVVVLSIGSLVFSVIL). Residues 1568 to 1579 (TSLENYFSPTLF) lie on the Extracellular side of the membrane. The chain crosses the membrane as a helical; Voltage-sensor span at residues 1580 to 1601 (RVIRLARIGRILRLIRAAKGIR). At 1602–1616 (TLLFALMMSLPALFN) the chain is on the cytoplasmic side. A helical transmembrane segment spans residues 1617-1639 (IGLLLFLVMFIYSIFGMASFPHV). The Extracellular portion of the chain corresponds to 1640 to 1653 (SWEAGIDDMFNFQT). Residues 1654 to 1676 (FANSMLCLFQITTSAGWDGLLSP) constitute an intramembrane region (pore-forming). Residues 1677–1704 (ILNTGPPYCDPNLPNSNGSRGNCGSPAV) lie on the Extracellular side of the membrane. Residue Asn1693 is glycosylated (N-linked (GlcNAc...) asparagine). A helical membrane pass occupies residues 1705-1729 (GILFFTTYIIISFLIVVNMYIAVIL). Over 1730 to 1962 (ENFNVATQES…TSKKVTAPGP (233 aa)) the chain is Cytoplasmic. The IQ domain maps to 1858 to 1887 (EDISATVIQKAYRSYVLHRSMTISNPPAVP). A disordered region spans residues 1914-1962 (KSETASAASFPPSYDSVTRGLSDQINMSTSSSMQNEDEGTSKKVTAPGP). Residues 1928–1947 (DSVTRGLSDQINMSTSSSMQ) show a composition bias toward polar residues.

This sequence belongs to the sodium channel (TC 1.A.1.10) family. Nav1.8/SCN10A subfamily. As to quaternary structure, the channel consists of an ion conducting pore forming alpha-subunit regulated by one or more associated auxiliary subunits SCN1B, SCN2B and SCN3B; electrophysiological properties may vary depending on the type of the associated beta subunits. Found in a number of complexes with PRX, DYNLT1 and PDZD2. Interacts with proteins such as FSTL1, PRX, DYNLT1, PDZD2, S100A10 and many others. Interacts with NEDD4 and NEDD4L. In terms of processing, ubiquitinated by NEDD4L; which promotes its endocytosis. Phosphorylation at Ser-1458 by PKC in a highly conserved cytoplasmic loop slows inactivation of the sodium channel and reduces peak sodium currents. Post-translationally, lacks the cysteine which covalently binds the conotoxin GVIIJ. This cysteine (position 825) is speculated in other sodium channel subunits alpha to be implied in covalent binding with the sodium channel subunit beta-2 or beta-4. As to expression, expressed in nodose ganglia, but not in cortex, hippocampus, cerebellum, liver, heart and skeletal muscle.

The protein resides in the cell membrane. It carries out the reaction Na(+)(in) = Na(+)(out). Functionally, tetrodotoxin-resistant channel that mediates the voltage-dependent sodium ion permeability of excitable membranes. Assuming opened or closed conformations in response to the voltage difference across the membrane, the protein forms a sodium-selective channel through which sodium ions may pass in accordance with their electrochemical gradient. Plays a role in neuropathic pain mechanisms. The polypeptide is Sodium channel protein type 10 subunit alpha (SCN10A) (Canis lupus familiaris (Dog)).